Consider the following 502-residue polypeptide: RNA-splicing ligase RtcB homolog 2 (502 aa).

Aspartate 120, cysteine 123, histidine 228, histidine 260, and histidine 354 together coordinate Mn(2+). 227 to 231 lines the GMP pocket; sequence NHYAE. GMP is bound by residues 354 to 355, 403 to 406, serine 410, and 429 to 432; these read HN, GGSM, and HGAG. Histidine 429 functions as the GMP-histidine intermediate in the catalytic mechanism.

It belongs to the RtcB family. In terms of assembly, catalytic component of the tRNA-splicing ligase complex. Requires Mn(2+) as cofactor.

It carries out the reaction a 3'-end 3'-phospho-ribonucleotide-RNA + a 5'-end dephospho-ribonucleoside-RNA + GTP = a ribonucleotidyl-ribonucleotide-RNA + GMP + diphosphate. It catalyses the reaction a 3'-end 2',3'-cyclophospho-ribonucleotide-RNA + a 5'-end dephospho-ribonucleoside-RNA + GTP + H2O = a ribonucleotidyl-ribonucleotide-RNA + GMP + diphosphate + H(+). Its function is as follows. Catalytic subunit of the tRNA-splicing ligase complex that acts by directly joining spliced tRNA halves to mature-sized tRNAs by incorporating the precursor-derived splice junction phosphate into the mature tRNA as a canonical 3',5'-phosphodiester. May act as an RNA ligase with broad substrate specificity, and may function toward other RNAs. This Culex quinquefasciatus (Southern house mosquito) protein is RNA-splicing ligase RtcB homolog 2.